A 220-amino-acid polypeptide reads, in one-letter code: Botcinic acid biosynthesis cluster B protein 12 (220 aa).

It participates in polyketide biosynthesis. Part of the gene cluster B that mediates the biosynthesis of botcinic acid and its botcinin derivatives, acetate-derived polyketides that contribute to virulence when combined with the sesquiterpene botrydial. Botcinic acid and its derivatives have been shown to induce chlorosis and necrosis during host plant infection, but also have antifungal activities. Two polyketide synthases, BOA6 and BOA9, are involved in the biosynthesis of botcinins. BOA6 mediates the formation of the per-methylated tetraketide core by condensation of four units of malonyl-CoA with one unit of acetyl-CoA, which would be methylated in activated methylene groups to yield a bicyclic acid intermediate that could then either be converted to botrylactone derivatives or lose the starter acetate unit through a retro-Claisen type C-C bond cleavage to yield botcinin derivatives. The second polyketide synthase, BOA9, is probably required for the biosynthesis of the tetraketide side chain of botcinins. The methyltransferase (MT) domain within BOA6 is probably responsible for the incorporation of four methyl groups. The trans-enoyl reductase BOA5 might take over the enoyl reductase function of BOA6 that misses an ER domain. The monooxygenases BOA2, BOA3 and BOA4 might be involved in further hydroxylations at C4, C5 and C8, whereas BOA7, close to BOA9, could potentially be involved in the hydroxylation at C4 in the side chain of botcinins. The polypeptide is Botcinic acid biosynthesis cluster B protein 12 (Botryotinia fuckeliana (strain B05.10) (Noble rot fungus)).